Here is a 774-residue protein sequence, read N- to C-terminus: Beta-xylosidase/alpha-L-arabinofuranosidase 2 (774 aa).

The first 33 residues, 1–33 (MASVENRTPNVSVFLCFFVLFATLLLSGGRVSS), serve as a signal peptide directing secretion. Residue asparagine 136 is glycosylated (N-linked (GlcNAc...) asparagine). Aspartate 303 is a catalytic residue. N-linked (GlcNAc...) asparagine glycosylation is present at asparagine 437.

Belongs to the glycoside hydrolase 3 family.

Its subcellular location is the secreted. It is found in the extracellular space. The protein localises to the extracellular matrix. It carries out the reaction Hydrolysis of (1-&gt;4)-beta-D-xylans, to remove successive D-xylose residues from the non-reducing termini.. The enzyme catalyses Hydrolysis of terminal non-reducing alpha-L-arabinofuranoside residues in alpha-L-arabinosides.. Functionally, a bifunctional beta-xylosidase/alpha-L-arabinosidase, exo-enzyme that acts synergistically with endohydrolases. Releases xylose and arabinose from cell walls. The polypeptide is Beta-xylosidase/alpha-L-arabinofuranosidase 2 (Medicago sativa subsp. varia (Alfalfa)).